The chain runs to 94 residues: Protein translocase subunit SecE (94 aa).

Residues 1–32 (MTDAVGSIDMPDAQDEAPDSKKSRKGGKRGKK) form a disordered region. Positions 22-32 (KSRKGGKRGKK) are enriched in basic residues. A helical transmembrane segment spans residues 65-85 (TVVIIFVVIMIGLVTLIDYGF).

It belongs to the SecE/SEC61-gamma family. As to quaternary structure, component of the Sec protein translocase complex. Heterotrimer consisting of SecY, SecE and SecG subunits. The heterotrimers can form oligomers, although 1 heterotrimer is thought to be able to translocate proteins. Interacts with the ribosome. Interacts with SecDF, and other proteins may be involved. Interacts with SecA.

The protein resides in the cell membrane. In terms of biological role, essential subunit of the Sec protein translocation channel SecYEG. Clamps together the 2 halves of SecY. May contact the channel plug during translocation. The polypeptide is Protein translocase subunit SecE (Streptomyces coelicolor (strain ATCC BAA-471 / A3(2) / M145)).